We begin with the raw amino-acid sequence, 269 residues long: Elongation factor Ts (269 aa).

Residues 76–79 (TDFV) form an involved in Mg(2+) ion dislocation from EF-Tu region.

The protein belongs to the EF-Ts family.

Its subcellular location is the cytoplasm. Associates with the EF-Tu.GDP complex and induces the exchange of GDP to GTP. It remains bound to the aminoacyl-tRNA.EF-Tu.GTP complex up to the GTP hydrolysis stage on the ribosome. The protein is Elongation factor Ts of Deinococcus geothermalis (strain DSM 11300 / CIP 105573 / AG-3a).